We begin with the raw amino-acid sequence, 209 residues long: Large ribosomal subunit protein uL3 (209 aa).

Positions 113 to 155 (TSRGHGYQGNIKRHHQSRGPETHGSRYHRIPGSMGSIINRVPK) are disordered.

This sequence belongs to the universal ribosomal protein uL3 family. Part of the 50S ribosomal subunit. Forms a cluster with proteins L14 and L19.

Its function is as follows. One of the primary rRNA binding proteins, it binds directly near the 3'-end of the 23S rRNA, where it nucleates assembly of the 50S subunit. The protein is Large ribosomal subunit protein uL3 of Lactobacillus delbrueckii subsp. bulgaricus (strain ATCC 11842 / DSM 20081 / BCRC 10696 / JCM 1002 / NBRC 13953 / NCIMB 11778 / NCTC 12712 / WDCM 00102 / Lb 14).